The primary structure comprises 419 residues: MQTFLKGKRVGYWLSEKKIKKLNFQAFAELCRKRGIEVVQLNLSRPIEEQGPLDVIIHKLTDVILEADQNDSQALELVHRFQEYIDAHPETIVLDPLPAIRTLLDRSKSYELIRKIEAYMKDDRICSPPFMELTSLCGDDTMRLLEENGLAFPFICKTRVAHGTNSHEMAIVFNQEGLSAIQPPCVVQNFINHNAVLYKVFVVGESYTVVQRPSLKNFSAGTSDRESIFFNSHNVSKPESSSVLTALDKIEGVFERPSDEVIRELSRALRQALGVSLFGIDIIINNQTGQHAVIDINAFPGYEGVSEFFTDLLNHIASVLQGQSSGVAGAGDVAPLKHSRLLAEQAGGLAAERTCSASPGCCSSMMGQEPPWTPEADMGGVGAGSTAKLPHQRLGCTAGVSPSFQQHCVASLATKASSQ.

Lysine 18 lines the 1D-myo-inositol 1,3,4-trisphosphate pocket. ATP-binding residues include arginine 106 and lysine 157. The ATP-grasp domain maps to 117 to 325; the sequence is EAYMKDDRIC…IASVLQGQSS (209 aa). 1D-myo-inositol 1,3,4-trisphosphate-binding residues include histidine 167 and lysine 199. ATP-binding positions include 188 to 199, serine 214, serine 232, and serine 236; that span reads QNFINHNAVLYK. Residues aspartate 281, aspartate 295, and asparagine 297 each coordinate Mg(2+). Asparagine 297 serves as a coordination point for 1D-myo-inositol 1,3,4-trisphosphate. N6-acetyllysine; by EP300 and CREBBP is present on lysine 388. Serine 401 carries the post-translational modification Phosphoserine. An N6-acetyllysine; by EP300 and CREBBP modification is found at lysine 415.

It belongs to the ITPK1 family. Monomer. Interacts with GPS1/COPS1. Mg(2+) is required as a cofactor. Post-translationally, acetylation by EP300 and CREBBP destabilizes ITPK1, and down-regulates enzymatic activity. Deacetylated by SIRT1.

The enzyme catalyses 1D-myo-inositol 3,4,5,6-tetrakisphosphate + ATP = 1D-myo-inositol 1,3,4,5,6-pentakisphosphate + ADP + H(+). It catalyses the reaction 1D-myo-inositol 1,3,4-trisphosphate + ATP = 1D-myo-inositol 1,3,4,5-tetrakisphosphate + ADP + H(+). It carries out the reaction 1D-myo-inositol 1,3,4-trisphosphate + ATP = 1D-myo-inositol 1,3,4,6-tetrakisphosphate + ADP + H(+). The catalysed reaction is 1D-myo-inositol 3,4,6-trisphosphate + ATP = 1D-myo-inositol 1,3,4,6-tetrakisphosphate + ADP + H(+). The enzyme catalyses 1D-myo-inositol 1,3,4-trisphosphate + 1D-myo-inositol 1,3,4,5,6-pentakisphosphate = 1D-myo-inositol 3,4,5,6-tetrakisphosphate + 1D-myo-inositol 1,3,4,6-tetrakisphosphate. It catalyses the reaction 1D-myo-inositol 1,3,4-trisphosphate + 1D-myo-inositol 1,3,4,5,6-pentakisphosphate = 1D-myo-inositol 3,4,5,6-tetrakisphosphate + 1D-myo-inositol 1,3,4,5-tetrakisphosphate. Its function is as follows. Kinase that can phosphorylate various inositol polyphosphate such as Ins(3,4,5,6)P4 or Ins(1,3,4)P3. Phosphorylates Ins(3,4,5,6)P4 at position 1 to form Ins(1,3,4,5,6)P5. This reaction is thought to have regulatory importance, since Ins(3,4,5,6)P4 is an inhibitor of plasma membrane Ca(2+)-activated Cl(-) channels, while Ins(1,3,4,5,6)P5 is not. Also phosphorylates Ins(1,3,4)P3 on O-5 and O-6 to form Ins(1,3,4,6)P4, an essential molecule in the hexakisphosphate (InsP6) pathway. Also acts as an inositol polyphosphate phosphatase that dephosphorylates Ins(1,3,4,5)P4 and Ins(1,3,4,6)P4 to Ins(1,3,4)P3, and Ins(1,3,4,5,6)P5 to Ins(3,4,5,6)P4. May also act as an isomerase that interconverts the inositol tetrakisphosphate isomers Ins(1,3,4,5)P4 and Ins(1,3,4,6)P4 in the presence of ADP and magnesium. Probably acts as the rate-limiting enzyme of the InsP6 pathway. Modifies TNF-alpha-induced apoptosis by interfering with the activation of TNFRSF1A-associated death domain. Plays an important role in MLKL-mediated necroptosis. Produces highly phosphorylated inositol phosphates such as inositolhexakisphosphate (InsP6) which bind to MLKL mediating the release of an N-terminal auto-inhibitory region leading to its activation. Essential for activated phospho-MLKL to oligomerize and localize to the cell membrane during necroptosis. The sequence is that of Inositol-tetrakisphosphate 1-kinase (ITPK1) from Bos taurus (Bovine).